The following is a 148-amino-acid chain: Ubiquitin-like protein 4A (148 aa).

In terms of domain architecture, Ubiquitin-like spans 1 to 76 (MQLTVKALKG…LNLMVKDQVA (76 aa)).

In terms of assembly, component of the bag6/bat3 complex.

It is found in the cytoplasm. Its subcellular location is the cytosol. It localises to the nucleus. Functionally, as part of a cytosolic protein quality control complex, the bag6/bat3 complex, maintains misfolded and hydrophobic patches-containing proteins in a soluble state and participates in their proper delivery to the endoplasmic reticulum or alternatively can promote their sorting to the proteasome where they undergo degradation. The bag6/bat3 complex is involved in the post-translational delivery of tail-anchored/type II transmembrane proteins to the endoplasmic reticulum membrane. Similarly, the bag6/bat3 complex also functions as a sorting platform for proteins of the secretory pathway that are mislocalized to the cytosol either delivering them to the proteasome for degradation or to the endoplasmic reticulum. The bag6/bat3 complex also plays a role in the endoplasmic reticulum-associated degradation (ERAD), a quality control mechanism that eliminates unwanted proteins of the endoplasmic reticulum through their retrotranslocation to the cytosol and their targeting to the proteasome. It maintains these retrotranslocated proteins in an unfolded yet soluble state condition in the cytosol to ensure their proper delivery to the proteasome. This is Ubiquitin-like protein 4A (ubl4a) from Xenopus laevis (African clawed frog).